A 310-amino-acid chain; its full sequence is Homeobox protein knotted-1-like 2 (310 aa).

The segment at 178–208 is disordered; that stretch reads SDDGAVSSDEELREDDDIAADDSQQRSNDRD. Residues 185-197 show a composition bias toward acidic residues; the sequence is SDEELREDDDIAA. An ELK domain is found at 208–228; that stretch reads DLKDQLLRKFGSHISSLKLEF. The homeobox; TALE-type DNA-binding region spans 229–292; the sequence is SKKKKKGKLP…NQRKRHWKPS (64 aa).

This sequence belongs to the TALE/KNOX homeobox family. As to quaternary structure, may form heterodimeric complex with the TALE/BELL protein BEL1, BLH1 and BLH2. Interacts with OFP12 and OFP14. Interacts with BZIP30. In terms of tissue distribution, expressed predominantly in shoot apices of seedlings, in the receptacle and developing pistil of flowers and in axillary buds of inflorescence stems.

The protein resides in the nucleus. Its function is as follows. May play a role in meristem function, and may be involved in maintaining cells in an undifferentiated, meristematic state. Probably binds to the DNA sequence 5'-TGAC-3'. The chain is Homeobox protein knotted-1-like 2 (KNAT2) from Arabidopsis thaliana (Mouse-ear cress).